The sequence spans 374 residues: Protein Brevis radix-like 2 (374 aa).

Disordered regions lie at residues 12–43 and 57–80; these read NTNNGGSKKQEEDEEEEDRVIETPRSKQIKSL and AYKSCKPCSGSSNQNKNRSYADSD. Residues 65 to 80 show a composition bias toward polar residues; that stretch reads SGSSNQNKNRSYADSD. Residues 143–198 form the BRX 1 domain; that stretch reads KEWVAQVEPGVLITFVSLPEGGNDMKRIRFSREMFDKWQAQKWWAENFDKVMELYN. Residues 205 to 316 are disordered; the sequence is QSVPLPTPPR…EELSVSNASD (112 aa). Polar residues-rich tracts occupy residues 246 to 259 and 267 to 288; these read SSGSLAHQPTTQTQ and GLATTPKLSSISGTKTETSSVD. Over residues 289 to 307 the composition is skewed to basic and acidic residues; sequence ESARSSFSREEEEADHSGE. Residues 319 to 374 enclose the BRX 2 domain; the sequence is TEWVEQDEAGVYITIRALPDGTRELRRVRFSREKFGETNARLWWEQNRARIQQQYL.

Belongs to the BRX family. As to expression, expressed in roots.

It is found in the nucleus. In Arabidopsis thaliana (Mouse-ear cress), this protein is Protein Brevis radix-like 2 (BRXL2).